The sequence spans 343 residues: tRNA N6-adenosine threonylcarbamoyltransferase (343 aa).

The Fe cation site is built by histidine 116 and histidine 120. Residues 138-142 (LVSGG), aspartate 171, glycine 184, aspartate 188, and asparagine 277 each bind substrate. Fe cation is bound at residue aspartate 306.

It belongs to the KAE1 / TsaD family. Fe(2+) is required as a cofactor.

The protein localises to the cytoplasm. The catalysed reaction is L-threonylcarbamoyladenylate + adenosine(37) in tRNA = N(6)-L-threonylcarbamoyladenosine(37) in tRNA + AMP + H(+). Required for the formation of a threonylcarbamoyl group on adenosine at position 37 (t(6)A37) in tRNAs that read codons beginning with adenine. Is involved in the transfer of the threonylcarbamoyl moiety of threonylcarbamoyl-AMP (TC-AMP) to the N6 group of A37, together with TsaE and TsaB. TsaD likely plays a direct catalytic role in this reaction. The chain is tRNA N6-adenosine threonylcarbamoyltransferase from Ligilactobacillus salivarius (strain UCC118) (Lactobacillus salivarius).